A 159-amino-acid polypeptide reads, in one-letter code: MKLTTMIKTAVAVVAMAAIATFAAPVALAAYPITGKLGSELTMTDTVGQVVLGWKVSDLKSSTAVIPGYPVAGQVWEATATVNAIRGSVTPAVSQFNARTADGINYRVLWQAAGPDTISGATIPQGEQSTGKIYFDVTGPSPTIVAMNNGMEDLLIWEP.

The N-terminal stretch at 1–29 is a signal peptide; that stretch reads MKLTTMIKTAVAVVAMAAIATFAAPVALA.

The protein localises to the secreted. This Mycobacterium bovis (strain ATCC BAA-935 / AF2122/97) protein is Immunogenic protein MPB63 (mpb63).